Reading from the N-terminus, the 339-residue chain is tRNA methyltransferase 10 homolog A (339 aa).

2 disordered regions span residues 1-90 and 282-339; these read MSSE…HDRK and DKAC…SLPH. A compositionally biased stretch (basic and acidic residues) spans 14–35; sequence NVDKKQGINEDQEESQKPRLGE. Residues 52–81 are a coiled coil; the sequence is KQWEEQRELRKQKRKEKRKRKKLERQCQME. Over residues 61–74 the composition is skewed to basic residues; sequence RKQKRKEKRKRKKL. One can recognise an SAM-dependent MTase TRM10-type domain in the interval 89–279; it reads RKRVRRDVVH…TILPQRKGAV (191 aa). Over residues 300–309 the composition is skewed to acidic residues; it reads GGSDSDSSEE. Over residues 310–330 the composition is skewed to basic and acidic residues; that stretch reads EYSRNELDSPHEEKQDKENHT. A Phosphoserine modification is found at serine 336.

Belongs to the class IV-like SAM-binding methyltransferase superfamily. TRM10 family. In terms of assembly, interacts with tRNA. Expressed in embryonic and fetal brain. It is expressed throughout the dorsal telencephalon at 8 and 11 weeks of gestation, with highest expression in ventricular zone and marginal zone. Detected in cerebellar cortex and nuclei, but not in dorsal telencephalon, at later stages.

The protein resides in the nucleus. The protein localises to the nucleolus. The catalysed reaction is guanosine(9) in tRNA + S-adenosyl-L-methionine = N(1)-methylguanosine(9) in tRNA + S-adenosyl-L-homocysteine + H(+). Its function is as follows. S-adenosyl-L-methionine-dependent guanine N(1)-methyltransferase that catalyzes the formation of N(1)-methylguanine at position 9 (m1G9) in tRNAs. Probably not able to catalyze formation of N(1)-methyladenine at position 9 (m1A9) in tRNAs. This chain is tRNA methyltransferase 10 homolog A (TRMT10A), found in Homo sapiens (Human).